We begin with the raw amino-acid sequence, 323 residues long: MEYNEFEIISKFFKNHQKKDKNQIKGIGDDSALIKIPKNNLLAISTDTLVEGKHFLKNITPKDLAYKSVAVNLSDLAAMGAKPTWITLSITMPKSDSVWLKSFSKSFFKILNKYKLNLIGGDTNSGPLSITLSIYGLIEGKNALLRGNAKNGDLIYITGNLGESAAGLSLLQKKTFLKNVKICNYLIKKHLKPIPRISEGIALRNIANAAIDISDGLISDLGHILKNSKCGADINLNTIPISKILTDNFKIDEYLNWALNSGEDYELCFTISKKNIKKLNVAIKKKIIKCTCIGYITSAEKGLNLIQNQKKIIFKKSGFNHFI.

Asp30, Ser45, Thr46, and Asp47 together coordinate Mg(2+). His54 is a substrate binding site. The Mg(2+) site is built by Asp75 and Asp122. ATP is bound by residues 121–122 (GD) and Arg146. A Mg(2+)-binding site is contributed by Asp212. ATP is bound at residue Ser214. Mg(2+) is bound at residue Asp215. Residues Glu263 and Phe319 each contribute to the substrate site.

It belongs to the thiamine-monophosphate kinase family.

It carries out the reaction thiamine phosphate + ATP = thiamine diphosphate + ADP. The protein operates within cofactor biosynthesis; thiamine diphosphate biosynthesis; thiamine diphosphate from thiamine phosphate: step 1/1. Catalyzes the ATP-dependent phosphorylation of thiamine-monophosphate (TMP) to form thiamine-pyrophosphate (TPP), the active form of vitamin B1. The sequence is that of Thiamine-monophosphate kinase from Buchnera aphidicola subsp. Schizaphis graminum (strain Sg).